Here is a 651-residue protein sequence, read N- to C-terminus: Probable potassium transport system protein Kup (651 aa).

A run of 12 helical transmembrane segments spans residues 41–61 (LVLG…IYAF), 82–102 (VVSL…VLFV), 130–150 (LILG…VITP), 163–183 (IVAP…LVTL), 194–214 (VAIV…ASGL), 235–255 (FLTV…LAMT), 276–296 (WLWI…AFIL), 309–329 (MIPS…TVIA), 366–386 (IYIP…VLGF), 395–415 (AYGI…YIAM), 426–446 (ALPI…ANII), and 450–470 (EGGW…WTWV).

Belongs to the HAK/KUP transporter (TC 2.A.72) family.

It localises to the cell inner membrane. The enzyme catalyses K(+)(in) + H(+)(in) = K(+)(out) + H(+)(out). In terms of biological role, transport of potassium into the cell. Likely operates as a K(+):H(+) symporter. The protein is Probable potassium transport system protein Kup of Brucella abortus (strain S19).